Consider the following 394-residue polypeptide: 3-dehydroquinate synthase (394 aa).

Residues 112–116 (GVIGD), 136–137 (TT), Lys149, Lys158, and 176–179 (TLAT) contribute to the NAD(+) site. The Zn(2+) site is built by Glu191, His254, and His276. Residues 371 to 388 (STNQHTTYSPHQHATTKP) are compositionally biased toward polar residues. The disordered stretch occupies residues 371–394 (STNQHTTYSPHQHATTKPPNRRPH).

This sequence belongs to the sugar phosphate cyclases superfamily. Dehydroquinate synthase family. NAD(+) is required as a cofactor. Requires Co(2+) as cofactor. It depends on Zn(2+) as a cofactor.

The protein resides in the cytoplasm. It catalyses the reaction 7-phospho-2-dehydro-3-deoxy-D-arabino-heptonate = 3-dehydroquinate + phosphate. Its pathway is metabolic intermediate biosynthesis; chorismate biosynthesis; chorismate from D-erythrose 4-phosphate and phosphoenolpyruvate: step 2/7. Functionally, catalyzes the conversion of 3-deoxy-D-arabino-heptulosonate 7-phosphate (DAHP) to dehydroquinate (DHQ). The protein is 3-dehydroquinate synthase of Xylella fastidiosa (strain 9a5c).